We begin with the raw amino-acid sequence, 579 residues long: Acetolactate synthase (579 aa).

Residue Glu-61 participates in thiamine diphosphate binding. FAD is bound by residues Arg-163, 274–295 (HGTAYANFAVMELDFVIAVGVR), and 317–336 (DIDPAEVGKNRSTDVPIVGD). Positions 408-487 (QHQMWAGQFV…VKVIILNNGW (80 aa)) are thiamine pyrophosphate binding. 2 residues coordinate Mg(2+): Asp-458 and Asn-485.

Belongs to the TPP enzyme family. Mg(2+) is required as a cofactor. It depends on thiamine diphosphate as a cofactor.

It carries out the reaction 2 pyruvate + H(+) = (2S)-2-acetolactate + CO2. It participates in amino-acid biosynthesis; L-isoleucine biosynthesis; L-isoleucine from 2-oxobutanoate: step 1/4. It functions in the pathway amino-acid biosynthesis; L-valine biosynthesis; L-valine from pyruvate: step 1/4. The sequence is that of Acetolactate synthase (ilvY) from Arthrospira platensis (Spirulina platensis).